A 460-amino-acid polypeptide reads, in one-letter code: MAGKSIFDKLWERHLITGEEGQPQLMYVDQHYIHEVTSPQAFQGLRDAGRKVRRPDLTFGTFDHNVPTVNIYDIRDVISKAQIDKLSENVKDFGIEHAAHGSELQGIVHMVGPETGKTQPGKFIVCGDSHTATHGAFGAIAFGIGTSEVEHVFATQTIWQVKPKKMLVKFTGVPPKGVYSKDFILALIARYGVAAGVGHVVEYAGDAIDHLTMEERMTICNMSIEFGSKMGIMNPDQKTYDYVKGRPGAPKDFEAAVADWKTLVSDPDAVYDKVIEIDVSELAPMVTWGTNPSMGVEFGAAFPEIRDMNDERAYNYMDLSPGKKAEDIDLGYIFIGSCTNARLSDLQLAAKFVAGKHIAPNLTAIVVPGSRPVKRAAEKMGLDKIFMDAGFEWRDPGCSMCLGMNPDKVPDGVHCASTSNRNFEDRQGFGAKTHLCSPAMAAAAAIAGRFVDVRQLPEVQ.

[4Fe-4S] cluster is bound by residues cysteine 338, cysteine 398, and cysteine 401.

The protein belongs to the aconitase/IPM isomerase family. LeuC type 1 subfamily. As to quaternary structure, heterodimer of LeuC and LeuD. It depends on [4Fe-4S] cluster as a cofactor.

It carries out the reaction (2R,3S)-3-isopropylmalate = (2S)-2-isopropylmalate. The protein operates within amino-acid biosynthesis; L-leucine biosynthesis; L-leucine from 3-methyl-2-oxobutanoate: step 2/4. Its function is as follows. Catalyzes the isomerization between 2-isopropylmalate and 3-isopropylmalate, via the formation of 2-isopropylmaleate. This chain is 3-isopropylmalate dehydratase large subunit, found in Streptococcus sanguinis (strain SK36).